A 791-amino-acid polypeptide reads, in one-letter code: Metabotropic glutamate receptor-like protein D (791 aa).

A signal peptide spans 1-22 (MKINSFLIILILLFISIKNSNG). Topologically, residues 23 to 390 (EPEKKFKLIT…TEVYQSRPIQ (368 aa)) are extracellular. N-linked (GlcNAc...) asparagine glycans are attached at residues asparagine 72, asparagine 168, asparagine 279, asparagine 290, asparagine 306, and asparagine 349. The chain crosses the membrane as a helical span at residues 391–411 (IAISSISSFFIVTVLVMMGLV). At 412–424 (VRFRKNPSIRSAS) the chain is on the cytoplasmic side. Residues 425-445 (PIFLNFILFGALIIYVGIIIW) traverse the membrane as a helical segment. Residues 446 to 453 (SSSINSAS) lie on the Extracellular side of the membrane. A helical transmembrane segment spans residues 454 to 474 (CNAQFWLVTLGFTTLIGSLVV). Over 475-495 (KNVRIWLIFDNPELKLVKITN) the chain is Cytoplasmic. The helical transmembrane segment at 496 to 516 (LQLVPWVGVCLVINIILMSIL) threads the bilayer. Over 517–550 (TSVGDLREVNAQGIDSLGKYEFMRICKMNSSGAS) the chain is Extracellular. N-linked (GlcNAc...) asparagine glycosylation is present at asparagine 545. The helical transmembrane segment at 551–571 (TLYTILAYFAALLLIGVFVSW) threads the bilayer. Topologically, residues 572–585 (KIRIVDILEFNESK) are cytoplasmic. The helical transmembrane segment at 586–606 (AIANTLYAISFCLFVIVPLMI) threads the bilayer. The Extracellular portion of the chain corresponds to 607–615 (SPQDKQSEK). A helical transmembrane segment spans residues 616–636 (IILCIAGLFIVTAAVLIIFVP). The Cytoplasmic segment spans residues 637 to 791 (KFYRVYIFGS…KNEENNDGDN (155 aa)). Disordered stretches follow at residues 664–715 (TARA…SEPN) and 746–791 (IITE…DGDN). The segment covering 674 to 689 (SSGGGAGSGGATGGSG) has biased composition (gly residues). Residues 749–760 (ENGQDSNNNNNN) show a composition bias toward low complexity. The stretch at 752-781 (QDSNNNNNNEENKDNNIENNKISEEIKENL) forms a coiled coil. Residues 761-785 (EENKDNNIENNKISEEIKENLKNEE) show a composition bias toward basic and acidic residues.

In the N-terminal section; belongs to the BMP lipoprotein family. It in the C-terminal section; belongs to the G-protein coupled receptor 3 family. GABA-B receptor subfamily.

The protein localises to the membrane. The polypeptide is Metabotropic glutamate receptor-like protein D (grlD) (Dictyostelium discoideum (Social amoeba)).